We begin with the raw amino-acid sequence, 198 residues long: Na(+)-translocating NADH-quinone reductase subunit E (198 aa).

6 helical membrane passes run 11–31, 40–60, 77–97, 110–130, 140–160, and 176–196; these read SIFI…FLAV, GLGI…NLVF, FLGF…LEMF, GIFL…SFMV, VVYG…MAAI, and LGIT…FSGI.

This sequence belongs to the NqrDE/RnfAE family. In terms of assembly, composed of six subunits; NqrA, NqrB, NqrC, NqrD, NqrE and NqrF.

It is found in the cell inner membrane. It carries out the reaction a ubiquinone + n Na(+)(in) + NADH + H(+) = a ubiquinol + n Na(+)(out) + NAD(+). Functionally, NQR complex catalyzes the reduction of ubiquinone-1 to ubiquinol by two successive reactions, coupled with the transport of Na(+) ions from the cytoplasm to the periplasm. NqrA to NqrE are probably involved in the second step, the conversion of ubisemiquinone to ubiquinol. This Tolumonas auensis (strain DSM 9187 / NBRC 110442 / TA 4) protein is Na(+)-translocating NADH-quinone reductase subunit E.